We begin with the raw amino-acid sequence, 497 residues long: Probable malate:quinone oxidoreductase (497 aa).

This sequence belongs to the MQO family. Requires FAD as cofactor.

It carries out the reaction (S)-malate + a quinone = a quinol + oxaloacetate. The protein operates within carbohydrate metabolism; tricarboxylic acid cycle; oxaloacetate from (S)-malate (quinone route): step 1/1. The sequence is that of Probable malate:quinone oxidoreductase from Flavobacterium johnsoniae (strain ATCC 17061 / DSM 2064 / JCM 8514 / BCRC 14874 / CCUG 350202 / NBRC 14942 / NCIMB 11054 / UW101) (Cytophaga johnsonae).